We begin with the raw amino-acid sequence, 245 residues long: uncharacterized protein (245 aa).

This is an uncharacterized protein from Dictyostelium discoideum (Social amoeba).